The primary structure comprises 132 residues: Long-chain acyl-CoA thioesterase FadM (132 aa).

Asp13 is an active-site residue.

It belongs to the 4-hydroxybenzoyl-CoA thioesterase family. In terms of assembly, homotetramer.

The enzyme catalyses (3E,5Z)-tetradecadienoyl-CoA + H2O = (3E,5Z)-tetradecadienoate + CoA + H(+). It carries out the reaction (3E,5Z)-dodecadienoyl-CoA + H2O = (3E,5Z)-dodecadienoate + CoA + H(+). It catalyses the reaction (9Z)-octadecenoyl-CoA + H2O = (9Z)-octadecenoate + CoA + H(+). The catalysed reaction is octadecanoyl-CoA + H2O = octadecanoate + CoA + H(+). The enzyme catalyses hexadecanoyl-CoA + H2O = hexadecanoate + CoA + H(+). It carries out the reaction (3S)-hydroxytetradecanoyl-CoA + H2O = (3S)-hydroxytetradecanoate + CoA + H(+). It catalyses the reaction tetradecanoyl-CoA + H2O = tetradecanoate + CoA + H(+). Long-chain acyl-CoA thioesterase that could be involved in beta-oxidation of fatty acids. Is most active with 3,5-tetradecadienoyl-CoA, a metabolite of oleic acid that is hydrolyzed during oleate beta-oxidation, but can also use other substrates such as 3,5-dodecadienoyl-CoA, 9-cis-octadecenoyl-CoA, octadecanoyl-CoA, hexadecanoyl-CoA, 3-hydroxytetradecanoyl-CoA and tetradecanoyl-CoA. In Escherichia coli (strain K12), this protein is Long-chain acyl-CoA thioesterase FadM.